Consider the following 432-residue polypeptide: Carbohydrate esterase MZ0003 (432 aa).

The signal sequence occupies residues 1 to 25 (MQRTCVLIVLIVTSTMWTPDPDVYA). Residues 266–271 (GHSRLG) carry the GXSYXG catalytic site motif motif. Ser-268 serves as the catalytic Nucleophile. The substrate site is built by Lys-272 and Trp-359. His-409 functions as the Charge relay system in the catalytic mechanism.

It belongs to the carbohydrate esterase 15 (CE15) family. Does not require metal ions for activity. serves as cofactor.

It is found in the periplasm. Its activity is regulated as follows. Is inhibited by PMSF and by NaF in vitro, which is consistent with the catalytic nucleophile being a serine. Functionally, displays some glucuronoyl esterase activity in vitro, since it is able to hydrolyze methyl 4-O-methyl-D-glucopyranosyluronate, allyl D-glucuronate, benzyl D-glucuronate and D-glucuronic acid methyl ester. However, esters of glucuronic acid are probably not its biological substrate, as they are not present in the marine environment. Can also hydrolyze a range of other esters, including p-nitrophenyl acetate. More likely biologically-relevant substrates for MZ0003 and other marine bacterial CE15s are algal cell wall polysaccharides, as these would be readily available in this environment and could be used as energy sources. The protein is Carbohydrate esterase MZ0003 of Unknown prokaryotic organism.